The sequence spans 376 residues: Mitogen-activated protein kinase 2 (376 aa).

One can recognise a Protein kinase domain in the interval 32-319 (YVPIKPIGRG…VTEALQHPYM (288 aa)). ATP is bound by residues 38 to 46 (IGRGAYGVV) and Lys-61. Asp-158 acts as the Proton acceptor in catalysis. Thr-191 carries the phosphothreonine modification. The TXY signature appears at 191–193 (TEY). Tyr-193 carries the post-translational modification Phosphotyrosine. Thr-196 is subject to Phosphothreonine.

This sequence belongs to the protein kinase superfamily. CMGC Ser/Thr protein kinase family. MAP kinase subfamily. As to quaternary structure, interacts with MKK3. Dually phosphorylated on Thr-191 and Tyr-193, which activates the enzyme. Phosphorylated on Ser residue. Highest levels in the stem. Present in the leaf, root and flower, but not in seeds.

It catalyses the reaction L-seryl-[protein] + ATP = O-phospho-L-seryl-[protein] + ADP + H(+). It carries out the reaction L-threonyl-[protein] + ATP = O-phospho-L-threonyl-[protein] + ADP + H(+). Activated by threonine and tyrosine phosphorylation. This chain is Mitogen-activated protein kinase 2 (MPK2), found in Arabidopsis thaliana (Mouse-ear cress).